The primary structure comprises 448 residues: 4-hydroxybenzoate transporter PcaK (448 aa).

At 1 to 30 (MNSPSLPAVERLDVQAFINAQPLSPYQWRI) the chain is on the cytoplasmic side. Residues 31–51 (VLLCFLIVFLDGLDTAAMGFI) form a helical membrane-spanning segment. The Periplasmic segment spans residues 52 to 67 (APALTQDWGIDRASLG). Residues 68 to 88 (PVMSAALIGMVFGALGSGPLA) traverse the membrane as a helical segment. The Cytoplasmic segment spans residues 89–94 (DRYGRK). A helical membrane pass occupies residues 95 to 115 (LVLVAAVFLFGLFSLASAYST). At 116–119 (NVEQ) the chain is on the periplasmic side. A helical transmembrane segment spans residues 120–140 (LLALRFLTGLGLGAAMPNATT). Over 141–152 (LLSEYTPERLKS) the chain is Cytoplasmic. The chain crosses the membrane as a helical span at residues 153-173 (LLVTSMFCGFNLGMACGGFVS). At 174–184 (AKLIPLFGWHS) the chain is on the periplasmic side. Residues 185–205 (LLLLGGLLPLVLAVVLLFRLP) form a helical membrane-spanning segment. The Cytoplasmic segment spans residues 206-261 (ESARYLVVRNRGSERVRQVLAPIAPAQVALARSFHVPEQQTVQARNVFAVIFSGTY). The helical transmembrane segment at 262–282 (SAGTLLLWLTYFMGLVIVYLL) threads the bilayer. Residues 283 to 301 (TSWLPTLMRDSGASLEQAA) lie on the Periplasmic side of the membrane. Residues 302–322 (FIGALFQFGGVLSAVAVGWAM) traverse the membrane as a helical segment. Over 323–329 (DRFNPHK) the chain is Cytoplasmic. Residues 330 to 350 (VIGLFYLLAGVFAWCVGQSLG) form a helical membrane-spanning segment. Residue Q351 is a topological domain, periplasmic. A helical membrane pass occupies residues 352 to 372 (VTLLATLVLLAGMCINGAQSA). Residues 373–398 (MPSLAARFYPTQGRATGVSWMLGIGR) are Cytoplasmic-facing. The chain crosses the membrane as a helical span at residues 399-419 (FGAILGAWIGATLLGLGWNFE). Over 420-421 (QV) the chain is Periplasmic. A helical membrane pass occupies residues 422 to 442 (LTALVLPAALATAAVLLKGLV). Residues 443–448 (SHADAG) lie on the Cytoplasmic side of the membrane.

It belongs to the major facilitator superfamily. Aromatic acid:H(+) symporter (AAHS) (TC 2.A.1.15) family.

The protein resides in the cell inner membrane. Its function is as follows. Transports 4-hydroxybenzoate (4-HBA) and protocatechuate across the membrane. Driven by the proton motive force. Also functions as a chemoreceptor, which is required for chemotaxis to aromatic acids. This chain is 4-hydroxybenzoate transporter PcaK (pcaK), found in Pseudomonas aeruginosa (strain ATCC 15692 / DSM 22644 / CIP 104116 / JCM 14847 / LMG 12228 / 1C / PRS 101 / PAO1).